An 88-amino-acid chain; its full sequence is Large ribosomal subunit protein bL27 (88 aa).

Positions Met1 to Leu21 are disordered.

This sequence belongs to the bacterial ribosomal protein bL27 family.

The polypeptide is Large ribosomal subunit protein bL27 (Mycobacterium sp. (strain MCS)).